The primary structure comprises 1473 residues: Collagen alpha-1(XVII) chain (1473 aa).

The span at 1-19 shows a compositional bias: basic and acidic residues; that stretch reads MDITQKNKRDGTEVTERII. Disordered stretches follow at residues 1-155 and 168-188; these read MDIT…PSTR and GSRSASVSPTRNSSNTLPIPK. Residues 1 to 474 are Cytoplasmic-facing; sequence MDITQKNKRD…CGSWCSWWKW (474 aa). The tract at residues 1 to 572 is nonhelical region (NC16); the sequence is MDITQKNKRD…MTEQENGNLR (572 aa). Composition is skewed to polar residues over residues 57–96, 111–120, and 170–184; these read LTHGSSGYINSSGSLRGNASTSSYRRAHSPASTLPNSPGS, EGSSSGNSSP, and RSASVSPTRNSSNTL. The tract at residues 146 to 231 is necessary for interaction with DST and for the recruitment of DST to hemidesmosome; that stretch reads RLQSASPSTR…WSSTLPAGSS (86 aa). The helical; Signal-anchor for type II membrane protein transmembrane segment at 475 to 495 threads the bilayer; the sequence is LLGLLLTWLLLLGLLFGLIAL. Residues 496 to 1473 lie on the Extracellular side of the membrane; the sequence is AEEVRKLKAR…RRRRSIAVKP (978 aa). 3 disordered regions span residues 567–1017, 1173–1234, and 1261–1308; these read ENGN…LSSS, FRGI…ISGA, and SFIV…SSMG. Positions 573–1459 are triple-helical region; the sequence is GSPGPKGDMG…KGEKGDKGDQ (887 aa). 4 stretches are compositionally biased toward low complexity: residues 619 to 638, 667 to 678, 729 to 742, and 769 to 790; these read EPGMEGPMGQRGREGPMGPR, PGSVGPKGSIGP, EPGAKGAMGPAGPD, and PGKPGLTGPQGPQGIPGTPGRP. Residues 814–835 are compositionally biased toward pro residues; it reads PGPPGPPGAMGPPGPPGAPGPV. Composition is skewed to low complexity over residues 837–847 and 854–866; these read PAGLPGQQGPR and GESFMGSSSSFSE. Pro residues-rich tracts occupy residues 878-899 and 913-922; these read PPGPPGPPGPPGEGLPGPPGPP and PPGPPGPPGP. Over residues 940 to 957 the composition is skewed to low complexity; it reads FPGLSGSGSSSLGLNLQG. Pro residues-rich tracts occupy residues 1001–1011 and 1179–1188; these read PPGPPGPPGPP and PPGPPGPPGL. Residues 1198–1210 show a composition bias toward polar residues; it reads TEDLSSYLQTAGL. 2 stretches are compositionally biased toward pro residues: residues 1214–1228 and 1266–1275; these read PGPPGPPGPPGPRGP and PPGPPGPQGP. A compositionally biased stretch (low complexity) spans 1283-1307; sequence STDSSYSRSGSSSSFSRDTSYSSSM. N-linked (GlcNAc...) asparagine glycosylation occurs at asparagine 1404. The disordered stretch occupies residues 1417-1473; it reads GAIPGPPGQKGEMGIPGPKGERGPAGPPGPRGHKGEKGDKGDQFYIGRRRRSIAVKP. Residues 1449–1458 show a composition bias toward basic and acidic residues; the sequence is HKGEKGDKGD. Residues 1460–1473 form a nonhelical region (NC1) region; sequence FYIGRRRRSIAVKP. Basic residues predominate over residues 1463–1473; it reads GRRRRSIAVKP.

In terms of assembly, homotrimers of alpha 1(XVII)chains. Interacts (via cytoplasmic region) with ITGB4 (via cytoplasmic region). Interacts (via cytoplasmic region) with DST (via N-terminus). Interacts (via N-terminus) with PLEC. Interacts (via cytoplasmic region) with DSP. In terms of processing, the intracellular/endo domain is disulfide-linked. Prolines at the third position of the tripeptide repeating unit (G-X-Y) are hydroxylated in some or all of the chains. Post-translationally, the ectodomain is shedded from the surface of keratinocytes resulting in a 120-kDa soluble form, also named as 120 kDa linear IgA disease antigen homolog. The shedding is mediated by membrane-bound metalloproteases.

The protein resides in the cell junction. It localises to the hemidesmosome. The protein localises to the membrane. It is found in the secreted. Its subcellular location is the extracellular space. The protein resides in the extracellular matrix. It localises to the basement membrane. Functionally, may play a role in the integrity of hemidesmosome and the attachment of basal keratinocytes to the underlying basement membrane. The 120 kDa linear IgA disease antigen homolog is an anchoring filament component involved in dermal-epidermal cohesion. The chain is Collagen alpha-1(XVII) chain (COL17A1) from Bos taurus (Bovine).